The sequence spans 435 residues: DEAD-box ATP-dependent RNA helicase CshB (435 aa).

The Q motif signature appears at 5-33 (SRFDQFGFQPFIGLAIDKLGFYEPTEVQQ). One can recognise a Helicase ATP-binding domain in the interval 36–208 (IPGILKGESI…SKYMENPRYE (173 aa)). 49 to 56 (SQTGTGKT) contacts ATP. The DEAD box motif lies at 156-159 (DEAD). The region spanning 235 to 378 (LLKNVLVGSQ…HVDWKNKEFV (144 aa)) is the Helicase C-terminal domain. A disordered region spans residues 383–435 (RNRRAKREAKRETADPREIGMRKKAKQKGKPNYKKKINYKMNEIKRRERRKKR). Positions 391-403 (AKRETADPREIGM) are enriched in basic and acidic residues. Residues 404–420 (RKKAKQKGKPNYKKKIN) are compositionally biased toward basic residues.

The protein belongs to the DEAD box helicase family. CshB subfamily.

The protein resides in the cytoplasm. It catalyses the reaction ATP + H2O = ADP + phosphate + H(+). DEAD-box RNA helicase involved in cold tolerance, motility, and tolerance to heat, alkali and oxidative stress. This is DEAD-box ATP-dependent RNA helicase CshB from Listeria monocytogenes serovar 1/2a (strain ATCC BAA-679 / EGD-e).